Here is a 151-residue protein sequence, read N- to C-terminus: Ribosomal RNA large subunit methyltransferase H (151 aa).

Residues Leu-73, Gly-100, and Leu-119 to Met-124 contribute to the S-adenosyl-L-methionine site.

The protein belongs to the RNA methyltransferase RlmH family. In terms of assembly, homodimer.

It localises to the cytoplasm. The catalysed reaction is pseudouridine(1915) in 23S rRNA + S-adenosyl-L-methionine = N(3)-methylpseudouridine(1915) in 23S rRNA + S-adenosyl-L-homocysteine + H(+). In terms of biological role, specifically methylates the pseudouridine at position 1915 (m3Psi1915) in 23S rRNA. This is Ribosomal RNA large subunit methyltransferase H from Campylobacter concisus (strain 13826).